The sequence spans 861 residues: Isoleucine--tRNA ligase (861 aa).

Residues 57–67 carry the 'HIGH' region motif; sequence PYANGNIHVGH. Position 549 (E549) interacts with L-isoleucyl-5'-AMP. A 'KMSKS' region motif is present at residues 590 to 594; it reads KMSKS. Residue K593 coordinates ATP.

The protein belongs to the class-I aminoacyl-tRNA synthetase family. IleS type 1 subfamily. As to quaternary structure, monomer.

The protein resides in the cytoplasm. It catalyses the reaction tRNA(Ile) + L-isoleucine + ATP = L-isoleucyl-tRNA(Ile) + AMP + diphosphate. Functionally, catalyzes the attachment of isoleucine to tRNA(Ile). As IleRS can inadvertently accommodate and process structurally similar amino acids such as valine, to avoid such errors it has two additional distinct tRNA(Ile)-dependent editing activities. One activity is designated as 'pretransfer' editing and involves the hydrolysis of activated Val-AMP. The other activity is designated 'posttransfer' editing and involves deacylation of mischarged Val-tRNA(Ile). This Mycoplasma pneumoniae (strain ATCC 29342 / M129 / Subtype 1) (Mycoplasmoides pneumoniae) protein is Isoleucine--tRNA ligase.